Reading from the N-terminus, the 386-residue chain is Paralemmin-1 (386 aa).

A coiled-coil region spans residues 4–115 (VEANTLQQER…TKENLAEAAA (112 aa)). 4 disordered regions span residues 21-40 (RKRQ…DRRQ), 51-149 (ERWL…PMKA), 240-290 (EATA…TMIF), and 321-378 (DAES…AKKQ). Basic and acidic residues-rich tracts occupy residues 24–40 (QTEI…DRRQ) and 68–95 (AMKK…RELE). A compositionally biased stretch (low complexity) spans 97–116 (LENSSSVTSTKENLAEAAAP). Basic and acidic residues-rich tracts occupy residues 259-282 (PRRE…EPSR), 322-334 (AESK…KDHA), and 365-377 (EAKE…DAKK). Residues Cys-380 and Cys-382 are each lipidated (S-palmitoyl cysteine). At Cys-383 the chain carries Cysteine methyl ester. Cys-383 carries the S-farnesyl cysteine lipid modification. The propeptide at 384 to 386 (TVM) is removed in mature form.

This sequence belongs to the paralemmin family. As to quaternary structure, interacts with dopamine receptor DRD3. Phosphorylated. As to expression, expressed in the lens (at protein level). Highly expressed in forebrain and cerebellum with lower expression in adrenal gland and heart. Expression weak or undetectable in other tissues.

Its subcellular location is the cell membrane. The protein resides in the cell projection. It localises to the filopodium membrane. The protein localises to the axon. It is found in the dendrite. Its subcellular location is the dendritic spine. The protein resides in the basolateral cell membrane. It localises to the apicolateral cell membrane. In terms of biological role, involved in plasma membrane dynamics and cell process formation. Isoform 1 and isoform 2 are necessary for axonal and dendritic filopodia induction, for dendritic spine maturation and synapse formation in a palmitoylation-dependent manner. The polypeptide is Paralemmin-1 (PALM) (Gallus gallus (Chicken)).